A 376-amino-acid polypeptide reads, in one-letter code: 4-hydroxy-3-methylbut-2-en-1-yl diphosphate synthase (flavodoxin) (376 aa).

Cys270, Cys273, Cys305, and Glu312 together coordinate [4Fe-4S] cluster.

This sequence belongs to the IspG family. It depends on [4Fe-4S] cluster as a cofactor.

It catalyses the reaction (2E)-4-hydroxy-3-methylbut-2-enyl diphosphate + oxidized [flavodoxin] + H2O + 2 H(+) = 2-C-methyl-D-erythritol 2,4-cyclic diphosphate + reduced [flavodoxin]. It functions in the pathway isoprenoid biosynthesis; isopentenyl diphosphate biosynthesis via DXP pathway; isopentenyl diphosphate from 1-deoxy-D-xylulose 5-phosphate: step 5/6. Converts 2C-methyl-D-erythritol 2,4-cyclodiphosphate (ME-2,4cPP) into 1-hydroxy-2-methyl-2-(E)-butenyl 4-diphosphate. In Colwellia psychrerythraea (strain 34H / ATCC BAA-681) (Vibrio psychroerythus), this protein is 4-hydroxy-3-methylbut-2-en-1-yl diphosphate synthase (flavodoxin).